A 340-amino-acid polypeptide reads, in one-letter code: Phosphoribosylformylglycinamidine cyclo-ligase (340 aa).

It belongs to the AIR synthase family.

It is found in the cytoplasm. It catalyses the reaction 2-formamido-N(1)-(5-O-phospho-beta-D-ribosyl)acetamidine + ATP = 5-amino-1-(5-phospho-beta-D-ribosyl)imidazole + ADP + phosphate + H(+). The protein operates within purine metabolism; IMP biosynthesis via de novo pathway; 5-amino-1-(5-phospho-D-ribosyl)imidazole from N(2)-formyl-N(1)-(5-phospho-D-ribosyl)glycinamide: step 2/2. This is Phosphoribosylformylglycinamidine cyclo-ligase from Streptococcus agalactiae serotype V (strain ATCC BAA-611 / 2603 V/R).